The chain runs to 508 residues: Cytochrome P450 monooxygenase tenA (508 aa).

The helical transmembrane segment at 8 to 24 (VSLPYLILSACLSVILL) threads the bilayer. C456 contributes to the heme binding site.

The protein belongs to the cytochrome P450 family. Heme is required as a cofactor.

It is found in the membrane. The protein operates within secondary metabolite biosynthesis. Cytochrome P450 monooxygenase; part of the gene cluster that mediates the biosynthesis of tenellin-type 2-pyridones, iron-chelating compounds involved in iron stress tolerance, competition with the natural competitor fungus Metarhizium robertsii and insect hosts infection. TenA catalyzes an oxidative ring expansion of pretenellin A and 14-hydropretellenin A to form the 2-pyridone core, leading to the production of pretenellin B and pyridovericin, respectively. The pathway begins with the assembly of the polyketide-amino acid backbone by the hybrid PKS-NRPS tenS with the help of the enoyl reductase tenC. These enzymes catalyze the synthesis of the pyrrolidine-2-dione intermediates pretellinin A, 11-hydropretellenin A, 12-hydropretellenin A, 13-hydropretellenin A, 14-hydropretellenin A, 12-oxopretellenin A and prototellinin D. The cytochrome P450 monooxygenase tenA then catalyzes an oxidative ring expansion of pretenellin A and 14-hydropretellenin A to form the 2-pyridone core, leading to pretenellin B and pyridovericin, respectively. The cytochrome P450 monooxygenase tenB is then required for the selective N-hydroxylation of the 2-pyridone nitrogen of yield tellinin and 15-hydroxytellenin (15-HT), respectively. The UDP-glucosyltransferase GT1 and the methyltransferase MT1, located outside the tenS gene cluster, contribute to the stepwise glycosylation and methylation of 15-HT to obtain the glycoside pyridovericin-N-O-(4-O-methyl-beta-D-glucopyranoside) (PMGP). Additional related compounds such as 1-O-methyl-15-HT, (8Z)-1-O-methyl-15-HT, and O-methyltenellin A are also produced but the enzymes involved in their biosynthesis have still to be determined. The protein is Cytochrome P450 monooxygenase tenA of Beauveria bassiana (White muscardine disease fungus).